A 1384-amino-acid chain; its full sequence is Enhancer of mRNA-decapping protein 4 (1384 aa).

WD repeat units follow at residues Gly-171–Gln-211, Asn-227–Ser-274, Gly-292–Pro-331, and His-340–Thr-390. 3 disordered regions span residues Thr-471–Ser-494, Ala-551–Pro-584, and Ala-796–Glu-931. Positions Ser-482–Ser-494 are enriched in polar residues. Basic and acidic residues predominate over residues Cys-834–Ile-844. Composition is skewed to polar residues over residues His-854–Glu-866 and Ser-918–Glu-931. Residues Thr-930–Gln-1012 are a coiled coil.

The protein belongs to the WD repeat EDC4 family.

The protein localises to the cytoplasm. Its subcellular location is the P-body. It is found in the nucleus. Functionally, in the process of mRNA degradation, seems to play a role in mRNA decapping. The polypeptide is Enhancer of mRNA-decapping protein 4 (edc4) (Danio rerio (Zebrafish)).